A 746-amino-acid polypeptide reads, in one-letter code: NAD(P)H-quinone oxidoreductase subunit 5, chloroplastic (746 aa).

The next 16 helical transmembrane spans lie at 9 to 29 (WIIP…LLLF), 40 to 60 (WTFL…YLSI), 89 to 109 (IDPL…LVLI), 125 to 145 (FAYM…SNLI), 147 to 167 (VYFF…FWFT), 185 to 205 (GDFG…SFEF), 221 to 241 (VNLL…IAKS), 258 to 278 (TPIS…FLVA), 280 to 300 (LLPL…IGII), 327 to 347 (LGYM…FHLI), 354 to 374 (ALLF…VGYS), 396 to 416 (TAFL…CFWS), 425 to 445 (LLFS…TAFY), 547 to 567 (ILFP…IGIP), 608 to 628 (FSVS…KPFY), and 723 to 743 (YLFL…FFYF).

It belongs to the complex I subunit 5 family. In terms of assembly, NDH is composed of at least 16 different subunits, 5 of which are encoded in the nucleus.

The protein resides in the plastid. It localises to the chloroplast thylakoid membrane. The enzyme catalyses a plastoquinone + NADH + (n+1) H(+)(in) = a plastoquinol + NAD(+) + n H(+)(out). It carries out the reaction a plastoquinone + NADPH + (n+1) H(+)(in) = a plastoquinol + NADP(+) + n H(+)(out). Its function is as follows. NDH shuttles electrons from NAD(P)H:plastoquinone, via FMN and iron-sulfur (Fe-S) centers, to quinones in the photosynthetic chain and possibly in a chloroplast respiratory chain. The immediate electron acceptor for the enzyme in this species is believed to be plastoquinone. Couples the redox reaction to proton translocation, and thus conserves the redox energy in a proton gradient. The polypeptide is NAD(P)H-quinone oxidoreductase subunit 5, chloroplastic (ndhF) (Olimarabidopsis pumila (Dwarf rocket)).